Here is a 225-residue protein sequence, read N- to C-terminus: Thaumatin-like protein (225 aa).

Positions 1-24 (MSTFKSLSLSALLFIAFLFTCARG) are cleaved as a signal peptide. 8 disulfides stabilise this stretch: Cys-33-Cys-224, Cys-74-Cys-84, Cys-89-Cys-95, Cys-140-Cys-213, Cys-146-Cys-196, Cys-154-Cys-164, Cys-168-Cys-177, and Cys-178-Cys-183.

Belongs to the thaumatin family. Post-translationally, N-glycosylated.

The protein localises to the secreted. Its function is as follows. Has antifungal activity against B.cinerea, C.comatus, M.arachidicola, P.piricola, C.albicans and S.carlsbergensis. Inhibits HIV-1 reverse transcriptase. In Actinidia chinensis var. chinensis (Chinese soft-hair kiwi), this protein is Thaumatin-like protein.